Here is a 603-residue protein sequence, read N- to C-terminus: Glutamyl-tRNA(Gln) amidotransferase subunit B, mitochondrial (603 aa).

Disordered stretches follow at residues 38-61 (RGRD…SNGA) and 72-91 (EQAR…PPEH). The segment covering 42–58 (WSSTSRRAIDTQTSGAS) has biased composition (polar residues).

It belongs to the GatB/GatE family. GatB subfamily. In terms of assembly, subunit of the heterotrimeric GatCAB amidotransferase (AdT) complex, composed of A, B and C subunits.

It localises to the mitochondrion. The catalysed reaction is L-glutamyl-tRNA(Gln) + L-glutamine + ATP + H2O = L-glutaminyl-tRNA(Gln) + L-glutamate + ADP + phosphate + H(+). Allows the formation of correctly charged Gln-tRNA(Gln) through the transamidation of misacylated Glu-tRNA(Gln) in the mitochondria. The reaction takes place in the presence of glutamine and ATP through an activated gamma-phospho-Glu-tRNA(Gln). This is Glutamyl-tRNA(Gln) amidotransferase subunit B, mitochondrial from Paracoccidioides brasiliensis (strain Pb18).